The primary structure comprises 637 residues: MSELAASLLSRVILPRPGEPLDVRKLYLEESTTNARRAHAPTRTSLQIGAESEVSFATYFNAFPASYWRRWTTCKSVVLRVQVTGAGRVDVYRTKATGARIFVEGHDFTGTEDQPAAVETEVVLQPFEDGGWVWFDITTDTAVTLHSGGWYATSPAPGTANIAVGIPTFNRPADCVNALRELTADPLVDQVIGAVIVPDQGERKVRDHPDFPAAAARLGSRLSIHDQPNLGGSGGYSRVMYEALKNTDCQQILFMDDDIRLEPDSILRVLAMHRFAKAPMLVGGQMLNLQEPSHLHIMGEVVDRSIFMWTAAPHAEYDHDFAEYPLNDNNSRSKLLHRRIDVDYNGWWTCMIPRQVAEELGQPLPLFIKWDDADYGLRAAEHGYPTVTLPGAAIWHMAWSDKDDAIDWQAYFHLRNRLVVAAMHWDGPKAQVIGLVRSHLKATLKHLACLEYSTVAIQNKAIDDFLAGPEHIFSILESALPQVHRIRKSYPDAVVLPAASELPPPLHKNKAMKPPVNPLVIGYRLARGIMHNLTAANPQHHRRPEFNVPTQDARWFLLCTVDGATVTTADGCGVVYRQRDRAKMFALLWQSLRRQRQLLKRFEEMRRIYRDALPTLSSKQKWETALLPAANQEPEHG.

The UDP-alpha-D-galactofuranose site is built by R171, Q200, N229, and D256. 2 residues coordinate Mn(2+): D256 and D258. The Proton acceptor role is filled by D372. Residue H396 coordinates Mn(2+).

Belongs to the glycosyltransferase 2 family. As to quaternary structure, homotetramer. Mn(2+) serves as cofactor. It depends on Mg(2+) as a cofactor.

The protein resides in the cell membrane. The enzyme catalyses beta-D-galactofuranosyl-(1-&gt;5)-beta-D-galactofuranosyl-(1-&gt;4)-alpha-L-rhamnosyl-(1-&gt;3)-N-acetyl-alpha-D-glucosaminyl-diphospho-trans,octa-cis-decaprenol + 28 UDP-alpha-D-galactofuranose = [beta-D-galactofuranosyl-(1-&gt;5)-beta-D-galactofuranosyl-(1-&gt;6)]14-beta-D-galactofuranosyl-(1-&gt;5)-beta-D-galactofuranosyl-(1-&gt;4)-alpha-L-rhamnopyranosyl-(1-&gt;3)-N-acetyl-alpha-D-glucosaminyl-diphospho-trans,octa-cis-decaprenol + 28 UDP + 28 H(+). Its pathway is cell wall biogenesis; cell wall polysaccharide biosynthesis. Involved in the galactan polymerization of the arabinogalactan (AG) region of the mycolylarabinogalactan-peptidoglycan (mAGP) complex, an essential component of the mycobacteria cell wall. Thus, successively transfers approximately 28 galactofuranosyl (Galf) residues from UDP-galactofuranose (UDP-Galf) onto the galactofuranosyl-galactofuranosyl-rhamnosyl-GlcNAc-diphospho-decaprenol (Galf-Galf-Rha-GlcNAc-PP-C50) acceptor produced by GlfT1, with alternating 1-&gt;5 and 1-&gt;6 links, forming a galactan domain with approximately 30 galactofuranosyl residues. In Mycobacterium tuberculosis (strain ATCC 25618 / H37Rv), this protein is Galactofuranosyltransferase GlfT2.